The following is a 185-amino-acid chain: Large ribosomal subunit protein uL5 (185 aa).

This sequence belongs to the universal ribosomal protein uL5 family. As to quaternary structure, part of the 50S ribosomal subunit; part of the 5S rRNA/L5/L18/L25 subcomplex. Contacts the 5S rRNA and the P site tRNA. Forms a bridge to the 30S subunit in the 70S ribosome.

This is one of the proteins that bind and probably mediate the attachment of the 5S RNA into the large ribosomal subunit, where it forms part of the central protuberance. In the 70S ribosome it contacts protein S13 of the 30S subunit (bridge B1b), connecting the 2 subunits; this bridge is implicated in subunit movement. Contacts the P site tRNA; the 5S rRNA and some of its associated proteins might help stabilize positioning of ribosome-bound tRNAs. The polypeptide is Large ribosomal subunit protein uL5 (Bacteroides thetaiotaomicron (strain ATCC 29148 / DSM 2079 / JCM 5827 / CCUG 10774 / NCTC 10582 / VPI-5482 / E50)).